A 3298-amino-acid polypeptide reads, in one-letter code: Protocadherin-16 (3298 aa).

The signal sequence occupies residues 1–42 (MQKELGIVPSCPGMKSPRPHLLLPLLLLLLLLLGAGVPGAWG). 27 consecutive Cadherin domains span residues 43 to 143 (QAGS…APAF), 144 to 255 (PQAR…APAF), 256 to 362 (NQSR…QPSM), 367 to 472 (LSAD…APAF), 474 to 578 (RQLY…EPQF), 579 to 685 (QRTF…PPQF), 686 to 790 (YPRE…PPIF), 791 to 894 (EQLQ…SPAF), 895 to 1000 (PAPE…APRF), 1001 to 1111 (NSPT…DPTF), 1112 to 1211 (LAVA…SPTF), 1218 to 1324 (AGGG…PPDL), 1333 to 1436 (VPVV…APAF), 1437 to 1546 (ARDP…APVF), 1547 to 1649 (ASPS…APTF), 1650 to 1751 (QQQE…APTF), 1752 to 1855 (GSAH…APAF), 1856 to 1960 (PVPA…APTF), 1965 to 2068 (LRLR…GPRF), 2069 to 2171 (PRAS…APRF), 2172 to 2277 (LRPH…RPTI), 2278 to 2376 (PQPW…APAF), 2377 to 2482 (SQSL…APSF), 2483 to 2602 (TLSH…PPVF), 2603 to 2706 (TRAS…GPAF), 2707 to 2813 (PLNL…DPVF), and 2814 to 2933 (LAPA…APDL). The Extracellular segment spans residues 43 to 2940 (QAGSLDLQID…PDLNLLLVGA (2898 aa)). Residues Asn217, Asn256, and Asn402 are each glycosylated (N-linked (GlcNAc...) asparagine). Asn584 carries an N-linked (GlcNAc...) asparagine glycan. Asn1249 is a glycosylation site (N-linked (GlcNAc...) asparagine). An N-linked (GlcNAc...) asparagine glycan is attached at Asn1521. Asn1718 carries an N-linked (GlcNAc...) asparagine glycan. Asn1996 carries an N-linked (GlcNAc...) asparagine glycan. Residues 2065-2094 (GPRFPRASSEATIRENAPPGTPIVSPRAVH) are disordered. N-linked (GlcNAc...) asparagine glycosylation is found at Asn2361, Asn2428, and Asn2569. 3 N-linked (GlcNAc...) asparagine glycosylation sites follow: Asn2761, Asn2792, and Asn2862. Residues 2941-2961 (VAASLGVVVVLALAALVLGLV) form a helical membrane-spanning segment. Over 2962–3298 (RARSRKAEAA…EPPDDTELHI (337 aa)) the chain is Cytoplasmic. Positions 2986–3040 (LQKLGREPPSPPPSEHLYHQTLPSYGGPGAGGPYPRGGSLDPSHSSGRGSAEAAE) are disordered. A compositionally biased stretch (gly residues) spans 3011-3020 (GGPGAGGPYP). Ser3055 bears the Phosphoserine mark. Disordered stretches follow at residues 3062-3082 (ARGPDSGIQQDADGLSDTSCE) and 3233-3298 (ASHR…ELHI). Composition is skewed to low complexity over residues 3244–3266 (SLSSAAMSPSFSPSLSPLAARSP) and 3276–3289 (GPSASALSAESGLE).

Heterophilic interaction with FAT4; this interaction affects their respective protein levels. As to expression, expressed in fibroblasts but not in melanocytes or keratinocytes.

The protein localises to the cell membrane. In terms of biological role, calcium-dependent cell-adhesion protein. Mediates functions in neuroprogenitor cell proliferation and differentiation. In the heart, has a critical role for proper morphogenesis of the mitral valve, acting in the regulation of cell migration involved in valve formation. This chain is Protocadherin-16 (DCHS1), found in Homo sapiens (Human).